The chain runs to 542 residues: Chaperonin GroEL 3 (542 aa).

ATP contacts are provided by residues threonine 30–proline 33, lysine 51, aspartate 87–threonine 91, glycine 415, and aspartate 496.

The protein belongs to the chaperonin (HSP60) family. As to quaternary structure, forms a cylinder of 14 subunits composed of two heptameric rings stacked back-to-back. Interacts with the co-chaperonin GroES.

Its subcellular location is the cytoplasm. The enzyme catalyses ATP + H2O + a folded polypeptide = ADP + phosphate + an unfolded polypeptide.. In terms of biological role, together with its co-chaperonin GroES, plays an essential role in assisting protein folding. The GroEL-GroES system forms a nano-cage that allows encapsulation of the non-native substrate proteins and provides a physical environment optimized to promote and accelerate protein folding. This is Chaperonin GroEL 3 from Sinorhizobium medicae (strain WSM419) (Ensifer medicae).